We begin with the raw amino-acid sequence, 751 residues long: MAVPAALIPPTQLVPPQPPISTSASSSGTTTSTSSATSSPAPSIGPPASSGPTLFRPEPIASSASSSAAATVTSPGGGGGGSGGGGGSGGNGGGGGSNCNPSLAAGSSGGGVSAGGGGASSTPITASTGSSSSSSSSSSSSSSSSSSSSSSSSSSSCGPLPGKPVYSTPSPVENTPQNNECKMVDLRGAKVASFTVEGCELICLPQAFDLFLKHLVGGLHTVYTKLKRLEITPVVCNVEQVRILRGLGAIQPGVNRCKLISRKDFETLYNDCTNASSRPGRPPKRTQSVTSPENSHIMPHSVPGLMSPGIIPPTGLTAAAAAAAAATNAAIAEAMKVKKIKLEAMSNYHASNNQHGADSENGDMNSSVGSSGGSWDKETLHSPPSQGSQAPVAHARMPAAFSLPVSHPLNHLQHSHLPPNGLELPFMMMPHPLIPVSLPPASVTMAMSQMNHLSTIANMAAAAQVQSPPSRVETSVIKERVPDSPSPAPSLEEGRRPGSHPSSHRSSSVSSSPARTESSSDRIPVHQNGLSMNQMLMGLSPNVLPGPKEGDLAGHDMGHESKRIHIEKDETPLSTPTARDSIDKLSLTGHGQPLPPGFPSPFLFPDGLSSIETLLTNIQGLLKVAIDNARAQEKQVQLEKTELKMDFLRERELRETLEKQLAMEQKNRAIVQKRLKKEKKAKRKLQEALEFETKRREQAEQTLKQAASADSLRVLNDSLTPEIEADRSGGRADAERTIQDGRLYLKTTVMY.

The interval 1 to 178 (MAVPAALIPP…PSPVENTPQN (178 aa)) is disordered. 2 stretches are compositionally biased toward low complexity: residues 20-53 (ISTSASSSGTTTSTSSATSSPAPSIGPPASSGPT) and 61-74 (ASSASSSAAATVTS). Gly residues-rich tracts occupy residues 75–97 (PGGGGGGSGGGGGSGGNGGGGGS) and 107–119 (SSGGGVSAGGGGA). Over residues 120–156 (SSTPITASTGSSSSSSSSSSSSSSSSSSSSSSSSSSS) the composition is skewed to low complexity. Polar residues predominate over residues 167–178 (STPSPVENTPQN). The interval 182-268 (KMVDLRGAKV…LISRKDFETL (87 aa)) is DACHbox-N. Residues 182 to 377 (KMVDLRGAKV…VGSSGGSWDK (196 aa)) are interaction with SIX6 and HDAC3. Disordered stretches follow at residues 273 to 295 (TNASSRPGRPPKRTQSVTSPENS), 351 to 393 (SNNQ…APVA), 467 to 525 (SPPS…RIPV), and 537 to 556 (MGLSPNVLPGPKEGDLAGHD). Composition is skewed to polar residues over residues 285 to 294 (RTQSVTSPEN) and 351 to 369 (SNNQHGADSENGDMNSSVG). At S484 the chain carries Phosphoserine. The span at 499 to 517 (SHPSSHRSSSVSSSPARTE) shows a compositional bias: low complexity. Residues 609–689 (SSIETLLTNI…KAKRKLQEAL (81 aa)) are DACHbox-C. The tract at residues 620-699 (GLLKVAIDNA…EFETKRREQA (80 aa)) is interaction with SIN3A. Residues 623–711 (KVAIDNARAQ…TLKQAASADS (89 aa)) adopt a coiled-coil conformation.

This sequence belongs to the DACH/dachshund family. Interacts with SIX1, SIX6 and EYA3. Interacts with NCOR1 and HDAC3 through its N-terminus. Interacts with SIN3A through its C-terminus. Interacts with SMAD3 and SMAD4. Expressed at higher levels in adult kidney and lung, and at lower levels in brain and testis. Expressed in embryonal kidneys, eyes, cochleae and limb buds.

It is found in the nucleus. Functionally, transcription factor that is involved in regulation of organogenesis. Seems to be a regulator of SIX1, SIX6 and probably SIX5. Corepression of precursor cell proliferation in myoblasts by SIX1 is switched to coactivation through recruitment of EYA3 to the SIX1-DACH1 complex. Transcriptional activation also seems to involve association of CREBBP. Seems to act as a corepressor of SIX6 in regulating proliferation by directly repressing cyclin-dependent kinase inhibitors, including the p27Kip1 promoter. Inhibits TGF-beta signaling through interaction with SMAD4 and NCOR1. Binds to chromatin DNA via its DACHbox-N domain. In Mus musculus (Mouse), this protein is Dachshund homolog 1 (Dach1).